The chain runs to 128 residues: MTSSSPTGGGPGRPSALAPEIADRLKRSADGLLPAIAQQYDTGEVLMLGWMDDEALHRTLTTGRCTYWSRSRGEYWVKGDTSGHFQWVKSVALDCDADTVLVKVDQVGAACHTGTRTCFDTDVLLADQ.

Asp-94 is a binding site for Mg(2+). Cys-95 contacts Zn(2+). 2 residues coordinate Mg(2+): Asp-96 and Asp-98. Zn(2+) is bound by residues Cys-111 and Cys-118.

It belongs to the PRA-CH family. As to quaternary structure, homodimer. It depends on Mg(2+) as a cofactor. Zn(2+) serves as cofactor.

It is found in the cytoplasm. It catalyses the reaction 1-(5-phospho-beta-D-ribosyl)-5'-AMP + H2O = 1-(5-phospho-beta-D-ribosyl)-5-[(5-phospho-beta-D-ribosylamino)methylideneamino]imidazole-4-carboxamide. It participates in amino-acid biosynthesis; L-histidine biosynthesis; L-histidine from 5-phospho-alpha-D-ribose 1-diphosphate: step 3/9. In terms of biological role, catalyzes the hydrolysis of the adenine ring of phosphoribosyl-AMP. This chain is Phosphoribosyl-AMP cyclohydrolase, found in Streptomyces coelicolor (strain ATCC BAA-471 / A3(2) / M145).